The following is a 223-amino-acid chain: UPF0441 protein YgiB (223 aa).

The segment covering 178 to 195 (TVPKTAMAPKPATTTTVT) has biased composition (low complexity). The tract at residues 178–223 (TVPKTAMAPKPATTTTVTRGGFGESVAKQSTMQRSAAGTSTRSMGG) is disordered. Residues 204–223 (AKQSTMQRSAAGTSTRSMGG) are compositionally biased toward polar residues.

It belongs to the UPF0441 family.

This is UPF0441 protein YgiB from Salmonella enteritidis PT4 (strain P125109).